The following is a 30-amino-acid chain: V-type proton ATPase catalytic subunit A isoform 1 (30 aa).

Belongs to the ATPase alpha/beta chains family. As to quaternary structure, V-ATPase is a heteromultimeric enzyme composed of a peripheral catalytic V1 complex (main components: subunits A, B, C, D, E, and F) attached to an integral membrane V0 proton pore complex (main component: the proteolipid protein).

It carries out the reaction ATP + H2O + 4 H(+)(in) = ADP + phosphate + 5 H(+)(out). Its function is as follows. Catalytic subunit of the peripheral V1 complex of vacuolar ATPase. V-ATPase vacuolar ATPase is responsible for acidifying a variety of intracellular compartments in eukaryotic cells. The protein is V-type proton ATPase catalytic subunit A isoform 1 of Equisetum arvense (Field horsetail).